A 364-amino-acid chain; its full sequence is DNA replication and repair protein RecF (364 aa).

30–37 (GNNGQGKT) is a binding site for ATP.

The protein belongs to the RecF family.

It localises to the cytoplasm. Functionally, the RecF protein is involved in DNA metabolism; it is required for DNA replication and normal SOS inducibility. RecF binds preferentially to single-stranded, linear DNA. It also seems to bind ATP. The polypeptide is DNA replication and repair protein RecF (Geotalea daltonii (strain DSM 22248 / JCM 15807 / FRC-32) (Geobacter daltonii)).